A 549-amino-acid polypeptide reads, in one-letter code: Glucose-6-phosphate isomerase (549 aa).

The Proton donor role is filled by Glu-355. Active-site residues include His-387 and Lys-515.

The protein belongs to the GPI family.

It is found in the cytoplasm. The catalysed reaction is alpha-D-glucose 6-phosphate = beta-D-fructose 6-phosphate. It functions in the pathway carbohydrate biosynthesis; gluconeogenesis. It participates in carbohydrate degradation; glycolysis; D-glyceraldehyde 3-phosphate and glycerone phosphate from D-glucose: step 2/4. In terms of biological role, catalyzes the reversible isomerization of glucose-6-phosphate to fructose-6-phosphate. The polypeptide is Glucose-6-phosphate isomerase (Histophilus somni (strain 129Pt) (Haemophilus somnus)).